A 1477-amino-acid polypeptide reads, in one-letter code: Neurexin-1 (1477 aa).

The signal sequence occupies residues M1–G30. Residues L31–C217 enclose the Laminin G-like 1 domain. At L31–T1401 the chain is on the extracellular side. Residues N125 and N190 are each glycosylated (N-linked (GlcNAc...) asparagine). Residues D198–E221 are disordered. The region spanning G213–S256 is the EGF-like 1 domain. Disulfide bonds link C228–C243 and C245–C255. Laminin G-like domains are found at residues I283–C473 and D480–C672. Residues D329, L346, and M407 each contribute to the Ca(2+) site. Disulfide bonds link C437/C473, C643/C672, C680/C691, C685/C700, and C702/C712. Residues T676–E713 form the EGF-like 2 domain. 2 Laminin G-like domains span residues V718–C891 and D905–C1080. Residues D765 and L782 each coordinate Ca(2+). N-linked (GlcNAc...) asparagine glycosylation is present at N790. A Ca(2+)-binding site is contributed by R841. Intrachain disulfides connect C883/C891, C1052/C1080, C1087/C1098, C1092/C1107, and C1109/C1119. One can recognise an EGF-like 3 domain in the interval P1083–N1120. Positions Y1126–V1294 constitute a Laminin G-like 6 domain. Residues D1176 and V1193 each contribute to the Ca(2+) site. The N-linked (GlcNAc...) asparagine glycan is linked to N1223. Ca(2+) contacts are provided by I1245 and N1247. The disordered stretch occupies residues T1325–S1390. A glycan (O-linked (Xyl...) (heparan sulfate) serine) is linked at S1355. A helical transmembrane segment spans residues G1402–M1422. The Cytoplasmic segment spans residues Y1423–V1477. The segment at N1444–N1470 is interaction with CASK. Residues N1444–V1477 form a disordered region.

It belongs to the neurexin family. Interacts (via laminin G-like domain 2 and/or laminin G-like domain 6) with NLGN1 forming a heterotetramer, where one NLGN1 dimer interacts with one NRXN1 dimer. Also interacts (via laminin G-like domain 2 and/or laminin G-like domain 6) with NLGN2, NLGN3 and NLGN4L; interactions with NLGN1, NLGN2, NLGN3 and NLGN4L are calcium-dependent. Interacts (via cytoplasmic C-terminal region) with CASK (via the PDZ, SH3 and guanylate kinase-like domains). Interacts (via cytoplasmic C-terminus) with CASKIN1 and APBA1. Interacts (via laminin G-like domain 2) with NXPH1 and NXPH3. Alpha-type isoforms (neurexin-1-alpha) interact (via laminin G-like domain 2 and/or laminin G-like domain 6) with DAG1 (via alpha-dystroglycan chain). Interacts with LRRTM1, LRRTM2, LRRTM3 and LRRTM4. Interacts with SYT13 and SYTL1. Interacts with CBLN1, CBLN2 and, less avidly, with CBLN4. Interacts with CLSTN3. Post-translationally, O-glycosylated; contains heparan sulfate. Heparan sulfate attachment is required for synapse development by mediating interactions with neuroligins and LRRTM2. Brain.

It is found in the presynaptic cell membrane. In terms of biological role, cell surface protein involved in cell-cell-interactions, exocytosis of secretory granules and regulation of signal transmission. Function is isoform-specific. Alpha-type isoforms have a long N-terminus with six laminin G-like domains and play an important role in synaptic signal transmission. Alpha-type isoforms play a role in the regulation of calcium channel activity and Ca(2+)-triggered neurotransmitter release at synapses and at neuromuscular junctions. They play an important role in Ca(2+)-triggered exocytosis of secretory granules in pituitary gland. They may affect their functions at synapses and in endocrine cells via their interactions with proteins from the exocytotic machinery. Likewise, alpha-type isoforms play a role in regulating the activity of postsynaptic NMDA receptors, a subtype of glutamate-gated ion channels. Both alpha-type and beta-type isoforms may play a role in the formation or maintenance of synaptic junctions via their interactions (via the extracellular domains) with neuroligin family members, CBLN1 or CBLN2. In vitro, triggers the de novo formation of presynaptic structures. May be involved in specification of excitatory synapses. Alpha-type isoforms were first identified as receptors for alpha-latrotoxin from spider venom. This is Neurexin-1 (NRXN1) from Homo sapiens (Human).